The following is a 253-amino-acid chain: uncharacterized protein (253 aa).

A BON 1 domain is found at 4-73 (FGKSTADRVK…IDVSGVTVLQ (70 aa)). The span at 79–93 (AAQTAPTTPAQTSPS) shows a compositional bias: low complexity. The tract at residues 79-105 (AAQTAPTTPAQTSPSVQDSPSTPVQMP) is disordered. Residues 119-188 (DTSRIAKAVL…VDISGLRVAQ (70 aa)) form the BON 2 domain. Residues 204–251 (TVYTVKPGDSLSKIAEHYYGDQMEYKKIAHYNNISNPDLIQPGQKLRI) form the LysM domain.

This is an uncharacterized protein from Deinococcus radiodurans (strain ATCC 13939 / DSM 20539 / JCM 16871 / CCUG 27074 / LMG 4051 / NBRC 15346 / NCIMB 9279 / VKM B-1422 / R1).